A 429-amino-acid chain; its full sequence is Phosphoribosylamine--glycine ligase (429 aa).

The 208-residue stretch at 109–316 (KDFLARHQIP…LVDLCLAACD (208 aa)) folds into the ATP-grasp domain. 135–196 (LREKGAPIVI…EEFLDGEEAS (62 aa)) contributes to the ATP binding site. The Mg(2+) site is built by Glu-286 and Asn-288.

Belongs to the GARS family. Monomer. The cofactor is Mg(2+). Requires Mn(2+) as cofactor.

It catalyses the reaction 5-phospho-beta-D-ribosylamine + glycine + ATP = N(1)-(5-phospho-beta-D-ribosyl)glycinamide + ADP + phosphate + H(+). Its pathway is purine metabolism; IMP biosynthesis via de novo pathway; N(1)-(5-phospho-D-ribosyl)glycinamide from 5-phospho-alpha-D-ribose 1-diphosphate: step 2/2. The chain is Phosphoribosylamine--glycine ligase from Salmonella typhimurium (strain LT2 / SGSC1412 / ATCC 700720).